A 446-amino-acid chain; its full sequence is uncharacterized protein (446 aa).

The disordered stretch occupies residues 141-282 (TEAETNGTRP…GPKPKVKRVS (142 aa)). Polar residues predominate over residues 159–170 (NSGSKPKAGTQS). The segment covering 194-210 (IKSERRSISQGGEKDKA) has biased composition (basic and acidic residues). A phosphoserine mark is found at Ser200, Ser202, Ser212, and Ser214. 2 stretches are compositionally biased toward low complexity: residues 211-221 (SSSSPSSSQQS) and 229-239 (SPSQQNSRSSS). Ser251 bears the Phosphoserine mark. Residues 269-280 (GKSRGPKPKVKR) are compositionally biased toward basic residues. Residues Ser282 and Ser307 each carry the phosphoserine modification.

This is an uncharacterized protein from Drosophila melanogaster (Fruit fly).